The chain runs to 229 residues: Cytidylate kinase (229 aa).

Position 12–20 (Gly12–Thr20) interacts with ATP.

Belongs to the cytidylate kinase family. Type 1 subfamily.

It localises to the cytoplasm. The enzyme catalyses CMP + ATP = CDP + ADP. It catalyses the reaction dCMP + ATP = dCDP + ADP. The protein is Cytidylate kinase of Stutzerimonas stutzeri (strain A1501) (Pseudomonas stutzeri).